Consider the following 763-residue polypeptide: ATP-dependent RNA helicase glh-1 (763 aa).

Residues 1–30 (MSDGWSDSESAAKAKTGFGSGGGFGGGNNG) form a disordered region. Gly residues predominate over residues 18 to 30 (FGSGGGFGGGNNG). 7 consecutive repeat copies span residues 24–33 (FGGGNNGGSG), 34–43 (FGGGKNGGTG), 44–53 (FGGGNTGGSG), 54–63 (FGGGNTGGSG), 64–73 (FGGGKTGGSG), 74–83 (FGGGNTCGSG), and 84–93 (FGGGSTGGSP). The 7 X 10 AA tandem repeats, Gly-rich stretch occupies residues 24–93 (FGGGNNGGSG…FGGGSTGGSP (70 aa)). 2 CCHC-type zinc fingers span residues 158–175 (NNCFNCQQPGHRSSDCPE) and 183–200 (RVCYNCQQPGHTSRECTE). A disordered region spans residues 193-230 (HTSRECTEERKPREGRTGGFGGGAGFGNNGGNDGFGGD). Residues 194 to 208 (TSRECTEERKPREGR) show a composition bias toward basic and acidic residues. A compositionally biased stretch (gly residues) spans 209 to 230 (TGGFGGGAGFGNNGGNDGFGGD). 2 consecutive CCHC-type zinc fingers follow at residues 242 to 259 (MKCFNCKGEGHRSAECPE) and 262 to 279 (RGCFNCGEQGHRSNECPN). The Q motif motif lies at 341-369 (KTFAEANLTETMQKNVAHAGYSKTTPIQQ). Residues 372-556 (LPLVHQGYDI…RAFLRENYVM (185 aa)) enclose the Helicase ATP-binding domain. 385-392 (AQTGSGKT) contacts ATP. A Phosphodegron motif is present at residues 423–427 (ILTPT). The short motif at 499–502 (DEAD) is the DEAD box element. Residues 592-739 (DIDSYTTEKS…IVPDWMQGAA (148 aa)) form the Helicase C-terminal domain.

This sequence belongs to the DEAD box helicase family. DDX4/VASA subfamily. In terms of assembly, interacts with csn-5; this may prevent glh-1 degradation induced by kgb-1. Interacts with zyx-1. Interacts (via the N-terminal region containing the four CCHC zinc fingers) with pan-1. Interacts with kgb-1; this may promote glh-1 degradation by the proteasome. Post-translationally, phosphorylated by kgb-1 (in vitro); this may be responsible for its degradation by the proteasome.

It localises to the cytoplasm. The protein localises to the cytoplasmic granule. The protein resides in the perinuclear region. It catalyses the reaction ATP + H2O = ADP + phosphate + H(+). Probable ATP-binding RNA helicase. May act redundantly with the P-granule component glh-4 to regulate the formation of the granular structure of P-granules in embryos. Plays a role in positively regulating the localization of pgl-1 to P-granules. May play a role in transgenerational epigenetic inheritance. May protect somatic cells from excessive apoptosis during normal development. The chain is ATP-dependent RNA helicase glh-1 from Caenorhabditis elegans.